Consider the following 77-residue polypeptide: Probable Vpr-like protein (77 aa).

Positions 34-42 (LIRLLQGLL) match the Nuclear export signal motif. A Nuclear localization signal motif is present at residues 44-53 (RLRFRKPKSK).

Its subcellular location is the virion. It is found in the host nucleus. In terms of biological role, seems to function as a Vpr-like protein, since it mediates host cell cycle arrest in G2 phase. Cell cycle arrest creates a favorable environment for maximizing viral expression and production. This is Probable Vpr-like protein from Felidae (cat family).